The chain runs to 100 residues: UPF0213 protein FN1575 (100 aa).

Residues 1-77 form the GIY-YIG domain; the sequence is MAYYLYMLRC…KYIKKKKENI (77 aa).

It belongs to the UPF0213 family.

The chain is UPF0213 protein FN1575 from Fusobacterium nucleatum subsp. nucleatum (strain ATCC 25586 / DSM 15643 / BCRC 10681 / CIP 101130 / JCM 8532 / KCTC 2640 / LMG 13131 / VPI 4355).